We begin with the raw amino-acid sequence, 223 residues long: Keratin-associated protein 5-4 (223 aa).

14 tandem repeats follow at residues C21–P24, C27–P30, C79–P82, C89–P92, C107–P110, C117–P120, C135–P138, C145–P148, C155–P158, C173–P176, C183–P186, C193–P196, C203–P206, and C213–P216. The segment at C21–P216 is 14 X 4 AA repeats of C-C-X-P.

Belongs to the KRTAP type 5 family. As to quaternary structure, interacts with hair keratins. Expressed during the active phases of the hair cycle in the medulla and the inner root sheath of the forming hair. Also expressed in the upper layers of the epidermis of skin.

Functionally, in the hair cortex, hair keratin intermediate filaments are embedded in an interfilamentous matrix, consisting of hair keratin-associated protein (KRTAP), which are essential for the formation of a rigid and resistant hair shaft through their extensive disulfide bond cross-linking with abundant cysteine residues of hair keratins. The matrix proteins include the high-sulfur and high-glycine-tyrosine keratins. This is Keratin-associated protein 5-4 from Mus musculus (Mouse).